An 83-amino-acid polypeptide reads, in one-letter code: Protein ShK-like4 (83 aa).

An N-terminal signal peptide occupies residues 1 to 21; that stretch reads MDTRVIAVLFVAIMVLSSTNA. The propeptide occupies 22–48; it reads LPKQKGSYKNMNHADFLKGLDRASSKR. 3 disulfide bridges follow: Cys-50/Cys-82, Cys-57/Cys-75, and Cys-67/Cys-79. The ShKT domain occupies 50–83; that stretch reads CRDSHWSCFFQSNYEDICSTAQAEECALSCGLCE.

Contains 3 disulfide bonds. As to expression, expressed in various neurons (ectodermal sensory cells) (in planulae and primary polyps). Not expressed in nematocytes.

In terms of biological role, probable neuropeptide. This Nematostella vectensis (Starlet sea anemone) protein is Protein ShK-like4.